Reading from the N-terminus, the 493-residue chain is Ribose import ATP-binding protein RbsA (493 aa).

ABC transporter domains lie at 3–239 (IEMK…VGRE) and 246–493 (KRTP…TGGR). Residue 35–42 (GENGAGKS) participates in ATP binding.

The protein belongs to the ABC transporter superfamily. Ribose importer (TC 3.A.1.2.1) family. The complex is composed of an ATP-binding protein (RbsA), two transmembrane proteins (RbsC) and a solute-binding protein (RbsB).

The protein resides in the cell membrane. It carries out the reaction D-ribose(out) + ATP + H2O = D-ribose(in) + ADP + phosphate + H(+). Part of the ABC transporter complex RbsABC involved in ribose import. Responsible for energy coupling to the transport system. The protein is Ribose import ATP-binding protein RbsA of Bacillus subtilis (strain 168).